The primary structure comprises 386 residues: S-adenosylmethionine synthase (386 aa).

His14 serves as a coordination point for ATP. Asp16 is a Mg(2+) binding site. K(+) is bound at residue Glu42. 2 residues coordinate L-methionine: Glu55 and Gln101. The interval 101-111 (QSADIALGVDE) is flexible loop. ATP is bound by residues 166 to 168 (DGK), 233 to 234 (RF), Asp242, 248 to 249 (RK), Ala265, and Lys269. Residue Asp242 coordinates L-methionine. Lys273 provides a ligand contact to L-methionine.

It belongs to the AdoMet synthase family. As to quaternary structure, homotetramer; dimer of dimers. It depends on Mg(2+) as a cofactor. Requires K(+) as cofactor.

It localises to the cytoplasm. It catalyses the reaction L-methionine + ATP + H2O = S-adenosyl-L-methionine + phosphate + diphosphate. The protein operates within amino-acid biosynthesis; S-adenosyl-L-methionine biosynthesis; S-adenosyl-L-methionine from L-methionine: step 1/1. Catalyzes the formation of S-adenosylmethionine (AdoMet) from methionine and ATP. The overall synthetic reaction is composed of two sequential steps, AdoMet formation and the subsequent tripolyphosphate hydrolysis which occurs prior to release of AdoMet from the enzyme. In Acholeplasma laidlawii (strain PG-8A), this protein is S-adenosylmethionine synthase.